Here is a 68-residue protein sequence, read N- to C-terminus: MNLIAAAIAIGLSALGAGIGNGLIVSRTVEGVARQPEARGQLMGIMFIGIGLVEALPIIGVVIAFMSL.

The next 2 helical transmembrane spans lie at 4 to 24 and 45 to 65; these read IAAA…NGLI and IMFI…VIAF.

It belongs to the ATPase C chain family. As to quaternary structure, F-type ATPases have 2 components, F(1) - the catalytic core - and F(0) - the membrane proton channel. F(1) has five subunits: alpha(3), beta(3), gamma(1), delta(1), epsilon(1). F(0) has three main subunits: a(1), b(2) and c(10-14). The alpha and beta chains form an alternating ring which encloses part of the gamma chain. F(1) is attached to F(0) by a central stalk formed by the gamma and epsilon chains, while a peripheral stalk is formed by the delta and b chains.

The protein localises to the cell membrane. Functionally, f(1)F(0) ATP synthase produces ATP from ADP in the presence of a proton or sodium gradient. F-type ATPases consist of two structural domains, F(1) containing the extramembraneous catalytic core and F(0) containing the membrane proton channel, linked together by a central stalk and a peripheral stalk. During catalysis, ATP synthesis in the catalytic domain of F(1) is coupled via a rotary mechanism of the central stalk subunits to proton translocation. Its function is as follows. Key component of the F(0) channel; it plays a direct role in translocation across the membrane. A homomeric c-ring of between 10-14 subunits forms the central stalk rotor element with the F(1) delta and epsilon subunits. The sequence is that of ATP synthase subunit c from Staphylococcus saprophyticus subsp. saprophyticus (strain ATCC 15305 / DSM 20229 / NCIMB 8711 / NCTC 7292 / S-41).